A 248-amino-acid chain; its full sequence is ATP synthase subunit a, chloroplastic (248 aa).

The next 5 helical transmembrane spans lie at 38–58 (QVLITSWVVIAILLGSAAIAV), 96–116 (VPFIGTLFLFIFVSNWSGALL), 135–155 (INTTVALALPTSVAYFYAGLT), 200–220 (LVVVVLVSLVPLVIPIPVMFL), and 221–241 (GLFTSGIQALIFATLAAAYIG).

Belongs to the ATPase A chain family. As to quaternary structure, F-type ATPases have 2 components, CF(1) - the catalytic core - and CF(0) - the membrane proton channel. CF(1) has five subunits: alpha(3), beta(3), gamma(1), delta(1), epsilon(1). CF(0) has four main subunits: a, b, b' and c.

The protein localises to the plastid. The protein resides in the chloroplast thylakoid membrane. Its function is as follows. Key component of the proton channel; it plays a direct role in the translocation of protons across the membrane. The polypeptide is ATP synthase subunit a, chloroplastic (Nymphaea alba (White water-lily)).